A 228-amino-acid polypeptide reads, in one-letter code: Uracil-DNA glycosylase (228 aa).

The Proton acceptor role is filled by Asp-64.

This sequence belongs to the uracil-DNA glycosylase (UDG) superfamily. UNG family.

The protein resides in the cytoplasm. It carries out the reaction Hydrolyzes single-stranded DNA or mismatched double-stranded DNA and polynucleotides, releasing free uracil.. In terms of biological role, excises uracil residues from the DNA which can arise as a result of misincorporation of dUMP residues by DNA polymerase or due to deamination of cytosine. In Yersinia pseudotuberculosis serotype O:1b (strain IP 31758), this protein is Uracil-DNA glycosylase.